The following is a 519-amino-acid chain: uncharacterized protein (519 aa).

The next 13 helical transmembrane spans lie at 19–39, 42–62, 87–107, 128–148, 179–199, 220–240, 270–290, 311–331, 345–365, 386–406, 413–433, 475–495, and 496–516; these read FSSSVWSIVPALLAIILAIAT, VLVSLSAGIIIGSLMLSDWQI, MNIVLFLLLLGVLTALLTVSG, LLAASLVFVTFIDDYFHSLAV, VMMPVSSWGAYIITLIGGLLA, FYAIFSIIMVFFVAYFSFDIA, LILPILVLIIATVSMMIYTGA, VGTSLVVGGFCSIIISTLLII, WIVGIKSMSGAIAILFFAWTI, IPMQFLPVILFVLGAAMAFST, FGIMLPIAAAMAANAAPELLL, LPYAATVATATSIGYIVVGFT, and YSGLAGFAATAVSLIVIIFAV.

Its subcellular location is the cell membrane. This is an uncharacterized protein from Haemophilus influenzae (strain ATCC 51907 / DSM 11121 / KW20 / Rd).